The chain runs to 655 residues: Probable potassium transport system protein Kup (655 aa).

12 helical membrane-spanning segments follow: residues 19-39 (GLLISLGIIYGDIGTSPLYVM), 42-62 (IAGGNVISENLILGGLSCVFW), 102-122 (VWPAMIGGAAMLADGIITPPI), 132-152 (LIFNKDIPTIPIVLAIIVMLF), 161-181 (IVGKFFGPIMFIWFAMLATLG), 214-234 (SGFWLLGAVFLCTTGAEALYS), 246-266 (ISWIFVKLALLINYFGQGAWI), 282-302 (IMPEWFIVYGIIIATMAAIIA), 338-358 (LFIPSINLLLLAGCIFVVLWF), 370-390 (LAINITFLMTTILLAYYLLII), 395-415 (FIWVGLLILMYLIIEVSFLVA), and 420-440 (FFHGGYFTLISSGILAFIMII).

Belongs to the HAK/KUP transporter (TC 2.A.72) family.

The protein resides in the cell inner membrane. The catalysed reaction is K(+)(in) + H(+)(in) = K(+)(out) + H(+)(out). Its function is as follows. Transport of potassium into the cell. Likely operates as a K(+):H(+) symporter. The chain is Probable potassium transport system protein Kup from Cytophaga hutchinsonii (strain ATCC 33406 / DSM 1761 / CIP 103989 / NBRC 15051 / NCIMB 9469 / D465).